The chain runs to 150 residues: Cytochrome c oxidase subunit 5A, mitochondrial (150 aa).

The N-terminal 41 residues, 1-41 (MLGTALRRCAVAAASRAGPRGLQHPAPVPGPTAAIQSIRCY), are a transit peptide targeting the mitochondrion. Positions 2 to 17 (LGTALRRCAVAAASRA) match the SIFI-degron motif. N6-acetyllysine is present on residues Lys87 and Lys113. Thr141 is subject to Phosphothreonine.

The protein belongs to the cytochrome c oxidase subunit 5A family. As to quaternary structure, component of the cytochrome c oxidase (complex IV, CIV), a multisubunit enzyme composed of 14 subunits. The complex is composed of a catalytic core of 3 subunits MT-CO1, MT-CO2 and MT-CO3, encoded in the mitochondrial DNA, and 11 supernumerary subunits COX4I, COX5A, COX5B, COX6A, COX6B, COX6C, COX7A, COX7B, COX7C, COX8 and NDUFA4, which are encoded in the nuclear genome. The complex exists as a monomer or a dimer and forms supercomplexes (SCs) in the inner mitochondrial membrane with NADH-ubiquinone oxidoreductase (complex I, CI) and ubiquinol-cytochrome c oxidoreductase (cytochrome b-c1 complex, complex III, CIII), resulting in different assemblies (supercomplex SCI(1)III(2)IV(1) and megacomplex MCI(2)III(2)IV(2)). Interacts with AFG1L. Interacts with RAB5IF. Post-translationally, in response to mitochondrial stress, the precursor protein is ubiquitinated by the SIFI complex in the cytoplasm before mitochondrial import, leading to its degradation. Within the SIFI complex, UBR4 initiates ubiquitin chain that are further elongated or branched by KCMF1.

It is found in the mitochondrion inner membrane. The protein operates within energy metabolism; oxidative phosphorylation. Its function is as follows. Component of the cytochrome c oxidase, the last enzyme in the mitochondrial electron transport chain which drives oxidative phosphorylation. The respiratory chain contains 3 multisubunit complexes succinate dehydrogenase (complex II, CII), ubiquinol-cytochrome c oxidoreductase (cytochrome b-c1 complex, complex III, CIII) and cytochrome c oxidase (complex IV, CIV), that cooperate to transfer electrons derived from NADH and succinate to molecular oxygen, creating an electrochemical gradient over the inner membrane that drives transmembrane transport and the ATP synthase. Cytochrome c oxidase is the component of the respiratory chain that catalyzes the reduction of oxygen to water. Electrons originating from reduced cytochrome c in the intermembrane space (IMS) are transferred via the dinuclear copper A center (CU(A)) of subunit 2 and heme A of subunit 1 to the active site in subunit 1, a binuclear center (BNC) formed by heme A3 and copper B (CU(B)). The BNC reduces molecular oxygen to 2 water molecules using 4 electrons from cytochrome c in the IMS and 4 protons from the mitochondrial matrix. The protein is Cytochrome c oxidase subunit 5A, mitochondrial (COX5A) of Nycticebus coucang (Slow loris).